Reading from the N-terminus, the 554-residue chain is Flavin-dependent halogenase ascD (554 aa).

3 residues coordinate FAD: Gly15, Gly18, and Glu48. Positions 331 and 332 each coordinate chloride. Val333 contributes to the FAD binding site.

Belongs to the flavin-dependent halogenase family.

The enzyme catalyses ilicicolin B + FADH2 + chloride + O2 = ilicicolin A + FAD + 2 H2O + H(+). It functions in the pathway secondary metabolite biosynthesis; terpenoid biosynthesis. Flavin-dependent halogenase; part of the asc-1 gene cluster that mediates the biosynthesis of both ascochlorin and ascofuranone, a strong inhibitor of cyanide-insensitive alternative oxidases and a promising drug candidate against African trypanosomiasis. The first step in the pathway is performed by the non-reducing polyketide synthase ascC that produces orsellinic acid by condensing acetyl-CoA with 3 malonyl-CoA units. Orsellinic acid is then prenylated by the prenyltransferase ascA to yield ilicicolinic acid B. Ilicicolinic acid B is further reduced to ilicicolin B by the reductase ascB. The halogenase ascD then chlorinates ilicicolin B to produce ilicicolin A which is converted to ilicicolin A epoxide by the cytochrome P450 monooxygenase ascE that catalyzes stereoselective epoxidation of the terminal double bond of the prenyl group. Ilicicolin A epoxide is the last common precursor for the biosynthesis of ascofuranone and ascochlorin. The terpene cyclase ascF produces a monocyclic terpene, and the cyclization reaction is proposed to be initiated by protonation of the terminal epoxide of ilicicolin A epoxide to generate a monocyclic tertiarycation, which is followed by a series of hydride and methyl shifts with abstraction of proton, leading to the formation of the (14S,15R,19R)-trimethylcyclohexanone ring structure of ilicicolin C, which is finally reduced to ascochlorin by the dehydrogenase ascG. On the other hand, ilicicolin A epoxide is hydroxylated by the cytochrome P450 monooxygenase ascH, and the resultant product is cyclized by the terpene cyclase ascI to ascofuranol via protonation-initiated epoxide ring opening, which facilitates the 6-endo-tet cyclization to form the tetrahy-drofuran ring. Finally, ascofuranol is oxidized into ascofuranone by ascJ. The protein is Flavin-dependent halogenase ascD of Acremonium egyptiacum (Oospora egyptiaca).